An 893-amino-acid chain; its full sequence is Translation initiation factor IF-2 (893 aa).

Disordered stretches follow at residues 51–203 (KEHG…AEAE) and 216–300 (EENE…SMQH). Composition is skewed to basic and acidic residues over residues 102-203 (ALEE…AEAE), 216-238 (EENEARWKEEEQKKSAAEKDADY), and 245-261 (HAREAEDAADRKEEQQP). One can recognise a tr-type G domain in the interval 392 to 561 (GRAPVVTIMG…LLQSEVLELT (170 aa)). Residues 401–408 (GHVDHGKT) form a G1 region. Residue 401 to 408 (GHVDHGKT) coordinates GTP. A G2 region spans residues 426-430 (GITQH). Residues 447 to 450 (DTPG) are G3. GTP is bound by residues 447–451 (DTPGH) and 501–504 (NKID). Residues 501 to 504 (NKID) form a G4 region. The segment at 537–539 (SAK) is G5.

The protein belongs to the TRAFAC class translation factor GTPase superfamily. Classic translation factor GTPase family. IF-2 subfamily.

It is found in the cytoplasm. Its function is as follows. One of the essential components for the initiation of protein synthesis. Protects formylmethionyl-tRNA from spontaneous hydrolysis and promotes its binding to the 30S ribosomal subunits. Also involved in the hydrolysis of GTP during the formation of the 70S ribosomal complex. This chain is Translation initiation factor IF-2, found in Aliivibrio fischeri (strain MJ11) (Vibrio fischeri).